The following is a 211-amino-acid chain: Endo-1,4-beta-xylanase 5 (211 aa).

The signal sequence occupies residues 1–16 (MKVTAAFASLLLTAFA). A GH11 domain is found at 19-210 (APEPVLVSRS…GVGSASVTIS (192 aa)). E106 functions as the Nucleophile in the catalytic mechanism. E197 (proton donor) is an active-site residue.

This sequence belongs to the glycosyl hydrolase 11 (cellulase G) family.

Its subcellular location is the secreted. It carries out the reaction Endohydrolysis of (1-&gt;4)-beta-D-xylosidic linkages in xylans.. Its pathway is glycan degradation; xylan degradation. In terms of biological role, endo-1,4-beta-xylanase involved in the hydrolysis of xylan, a major structural heterogeneous polysaccharide found in plant biomass representing the second most abundant polysaccharide in the biosphere, after cellulose. The protein is Endo-1,4-beta-xylanase 5 (XYN5) of Aspergillus niger.